Reading from the N-terminus, the 134-residue chain is ATP synthase epsilon chain, plastid (134 aa).

It belongs to the ATPase epsilon chain family. In terms of assembly, F-type ATPases have 2 components, CF(1) - the catalytic core - and CF(0) - the membrane proton channel. CF(1) has five subunits: alpha(3), beta(3), gamma(1), delta(1), epsilon(1). CF(0) has three main subunits: a, b and c.

Its subcellular location is the plastid membrane. Produces ATP from ADP in the presence of a proton gradient across the membrane. In Prototheca wickerhamii, this protein is ATP synthase epsilon chain, plastid.